The primary structure comprises 433 residues: F-box only protein 15 (433 aa).

Positions 1–41 (MPSEILVKILSYLDAVTLVCIGCVSRRFYHLADDNLIWVRK) constitute an F-box domain.

As to quaternary structure, directly interacts with SKP1 and CUL1. As to expression, expressed in testis.

Its function is as follows. Substrate-recognition component of the SCF (SKP1-CUL1-F-box protein)-type E3 ubiquitin ligase complex. The protein is F-box only protein 15 (Fbxo15) of Mus musculus (Mouse).